A 264-amino-acid polypeptide reads, in one-letter code: Wtf element wtf11 (264 aa).

The span at 1–12 shows a compositional bias: polar residues; the sequence is MNSNYVPLTSSV. The segment at 1–26 is disordered; it reads MNSNYVPLTSSVDVEEKMESENGVDL. Helical transmembrane passes span 107 to 127, 145 to 165, 180 to 200, and 217 to 237; these read LLFV…VIFG, LSWF…YDFW, WKNT…GFFV, and SLFA…FETL.

This sequence belongs to the WTF family.

It localises to the membrane. Its function is as follows. May act in meiotic drive. In Schizosaccharomyces pombe (strain 972 / ATCC 24843) (Fission yeast), this protein is Wtf element wtf11.